A 551-amino-acid chain; its full sequence is Hydroxylamine reductase (551 aa).

[2Fe-2S] cluster is bound by residues Cys-3, Cys-6, Cys-18, and Cys-25. 8 residues coordinate hybrid [4Fe-2O-2S] cluster: His-249, Glu-273, Cys-317, Cys-405, Cys-433, Cys-458, Glu-492, and Lys-494. Position 405 is a cysteine persulfide (Cys-405).

This sequence belongs to the HCP family. [2Fe-2S] cluster serves as cofactor. It depends on hybrid [4Fe-2O-2S] cluster as a cofactor.

It is found in the cytoplasm. The enzyme catalyses A + NH4(+) + H2O = hydroxylamine + AH2 + H(+). Functionally, catalyzes the reduction of hydroxylamine to form NH(3) and H(2)O. This is Hydroxylamine reductase from Edwardsiella ictaluri (strain 93-146).